Consider the following 218-residue polypeptide: Protein N-lysine methyltransferase METTL21A (218 aa).

S-adenosyl-L-methionine-binding positions include Trp-47, 73-75 (GAG), Asp-94, Trp-125, and Ala-143.

The protein belongs to the methyltransferase superfamily. METTL21 family. In terms of assembly, interacts with heat shock protein 70 family members; at least some of these proteins are methylation substrates.

Its subcellular location is the cytoplasm. The catalysed reaction is L-lysyl-[protein] + 3 S-adenosyl-L-methionine = N(6),N(6),N(6)-trimethyl-L-lysyl-[protein] + 3 S-adenosyl-L-homocysteine + 3 H(+). Functionally, protein-lysine methyltransferase that selectively trimethylates residues in heat shock protein 70 (HSP70) family members. Contributes to the in vivo trimethylation of Lys residues in HSPA1 and HSPA8. In vitro methylates 'Lys-561' in HSPA1, 'Lys-564' in HSPA2, 'Lys-585' in HSPA5, 'Lys-563' in HSPA6 and 'Lys-561' in HSPA8. The polypeptide is Protein N-lysine methyltransferase METTL21A (METTL21A) (Homo sapiens (Human)).